We begin with the raw amino-acid sequence, 502 residues long: MTLLHCWLLLVGHLASTAYADFITKDFKSLPPPAYDTNATQALVPYNAALEERNGPSSSTALLQYIDHKPGLMKKLLAGLSIRFAPPTMKVISTPTDMLRIDKIKNNIIKSSQWKRWARSLLEQNSMQNSHVIITKKMMDDLKPTNFFLVLLEASKDKNTKAVAKILEETQFARWCTIEHESISPMEFYDVLQLNLNEPIAYMERLPVLLRYWKYYKSVHSPMSSVATPKDIIDKQTVNRFGPYWKHTGEIAELLRLDFDSDSFFNHPARNVWLDLMKTYLDDTKTAEPLMIKTFQLLGNAAAKNLQNNVYSPIHFAERWIQANLQPIDVVTILGLDIHDSNLATNSAFSFLKVFIEKFLVNHPEADTTVVKIFSRLGSDESEKALALRKSFVSFFLRTPKFTPKTVMSIFDLTISADYVEKNPVWAIWMEYVNVYLVKNKVCPEGPLADTLEFLGSTAAADGVVRKKSIELLYSSWSGKTSQDTRIKQFLTAAARLNQLEL.

The N-terminal stretch at M1–A20 is a signal peptide. N-linked (GlcNAc...) asparagine glycosylation is present at N38. The dEER motif lies at L50–R53.

This sequence belongs to the RxLR effector family.

It localises to the secreted. The protein resides in the host cell membrane. Its function is as follows. Secreted effector that triggers a robust hypersensitive response (HR) in Lactuca serriola LS102. The response to BLN06 was visible as chlorosis but not as strong necrosis. This is RxLR effector protein BLN06 from Bremia lactucae (Lettuce downy mildew).